Consider the following 539-residue polypeptide: MHAKGLTAADLASYGISDVTEIVHNPDYDLLFKEETAPGLQGYERGTVTSLGAVAVDTGIFTGRSPKDKYLVRDDTTRDTVWWSDQGKGKNDNRPLSPEVWQHLKGLVTRQLSNKRLFVVDAYCGANPDSRLKVRFITEVAWQAHFVKNMFIRPEADELAGFEPDFIVMNGAKCTNPQWQAQGLNSENFVAFNLTERIQLIGGTWYGGEMKKGMFSIMNYLLPLKGIASMHCSANVGEQGDVAIFFGLSGTGKTTLSTDPKRRLIGDDEHGWDDDGVFNFEGGCYAKTIKLSADAEPDIYGAITRDALLENVTVRADGSVDFDDGSKTENTRVSYPIYHIKNIVKPVSKAGAAKKVIFLTADAFGVLPPVSRLTADQTQYHFLSGFTAKLAGTERGVTEPTPTFSACFGAAFLTLHPTQYAEVLVRRMQAAGAQAYLVNTGWNGSGKRISIKDTRAIIDAILNGDIDRVETFTLPIFNLAVPIELPGVNPAILDPRDTYANREQWQEKAQDLAQRFITNFDKYTDTPAGAALVHAGPRR.

Substrate-binding residues include arginine 64, tyrosine 206, and lysine 212. ATP is bound by residues lysine 212, histidine 231, and 247–255 (GLSGTGKTT). Residues lysine 212 and histidine 231 each coordinate Mn(2+). Aspartate 268 contributes to the Mn(2+) binding site. Residues glutamate 296, arginine 332, 448–449 (RI), and threonine 454 contribute to the ATP site. Residue arginine 332 participates in substrate binding.

The protein belongs to the phosphoenolpyruvate carboxykinase (ATP) family. Monomer. The cofactor is Mn(2+).

It is found in the cytoplasm. It carries out the reaction oxaloacetate + ATP = phosphoenolpyruvate + ADP + CO2. It functions in the pathway carbohydrate biosynthesis; gluconeogenesis. Involved in the gluconeogenesis. Catalyzes the conversion of oxaloacetate (OAA) to phosphoenolpyruvate (PEP) through direct phosphoryl transfer between the nucleoside triphosphate and OAA. The polypeptide is Phosphoenolpyruvate carboxykinase (ATP) (Edwardsiella ictaluri (strain 93-146)).